Reading from the N-terminus, the 354-residue chain is DNA polymerase IV (354 aa).

In terms of domain architecture, UmuC spans 14–198 (IIHIDMDAFF…MDIAKFHGVG (185 aa)). The Mg(2+) site is built by Asp-18 and Asp-116. The active site involves Glu-117.

The protein belongs to the DNA polymerase type-Y family. In terms of assembly, monomer. Requires Mg(2+) as cofactor.

It is found in the cytoplasm. The catalysed reaction is DNA(n) + a 2'-deoxyribonucleoside 5'-triphosphate = DNA(n+1) + diphosphate. Poorly processive, error-prone DNA polymerase involved in untargeted mutagenesis. Copies undamaged DNA at stalled replication forks, which arise in vivo from mismatched or misaligned primer ends. These misaligned primers can be extended by PolIV. Exhibits no 3'-5' exonuclease (proofreading) activity. May be involved in translesional synthesis, in conjunction with the beta clamp from PolIII. The chain is DNA polymerase IV from Streptococcus gordonii (strain Challis / ATCC 35105 / BCRC 15272 / CH1 / DL1 / V288).